Reading from the N-terminus, the 474-residue chain is tRNA-2-methylthio-N(6)-dimethylallyladenosine synthase (474 aa).

The MTTase N-terminal domain occupies 3–120 (KKLHIKTWGC…LPEMINSVRG (118 aa)). [4Fe-4S] cluster contacts are provided by cysteine 12, cysteine 49, cysteine 83, cysteine 157, cysteine 161, and cysteine 164. The Radical SAM core domain occupies 143 to 375 (RAEGPTAFVS…QERINQQAMA (233 aa)). The TRAM domain maps to 378–441 (RRMLGSTQRI…PNSLRGKVVR (64 aa)).

The protein belongs to the methylthiotransferase family. MiaB subfamily. Monomer. Requires [4Fe-4S] cluster as cofactor.

It is found in the cytoplasm. It carries out the reaction N(6)-dimethylallyladenosine(37) in tRNA + (sulfur carrier)-SH + AH2 + 2 S-adenosyl-L-methionine = 2-methylsulfanyl-N(6)-dimethylallyladenosine(37) in tRNA + (sulfur carrier)-H + 5'-deoxyadenosine + L-methionine + A + S-adenosyl-L-homocysteine + 2 H(+). Catalyzes the methylthiolation of N6-(dimethylallyl)adenosine (i(6)A), leading to the formation of 2-methylthio-N6-(dimethylallyl)adenosine (ms(2)i(6)A) at position 37 in tRNAs that read codons beginning with uridine. The polypeptide is tRNA-2-methylthio-N(6)-dimethylallyladenosine synthase (Salmonella arizonae (strain ATCC BAA-731 / CDC346-86 / RSK2980)).